The sequence spans 351 residues: GTPase Obg (351 aa).

Positions Met-1 to Ile-159 constitute an Obg domain. One can recognise an OBG-type G domain in the interval Ala-160–Arg-327. GTP contacts are provided by residues Gly-166 to Ser-173, Phe-191 to Thr-195, Asp-212 to Gly-215, Asn-279 to Asp-282, and Ser-308 to Ala-310. Mg(2+)-binding residues include Ser-173 and Thr-193.

This sequence belongs to the TRAFAC class OBG-HflX-like GTPase superfamily. OBG GTPase family. Monomer. Mg(2+) is required as a cofactor.

It localises to the cytoplasm. In terms of biological role, an essential GTPase which binds GTP, GDP and possibly (p)ppGpp with moderate affinity, with high nucleotide exchange rates and a fairly low GTP hydrolysis rate. Plays a role in control of the cell cycle, stress response, ribosome biogenesis and in those bacteria that undergo differentiation, in morphogenesis control. This is GTPase Obg from Rhodospirillum centenum (strain ATCC 51521 / SW).